Here is a 545-residue protein sequence, read N- to C-terminus: Chaperonin GroEL (545 aa).

ATP is bound by residues 29 to 32 (TMGP), K50, 86 to 90 (DGTTT), G414, 480 to 482 (NAA), and D496.

It belongs to the chaperonin (HSP60) family. Forms a cylinder of 14 subunits composed of two heptameric rings stacked back-to-back. Interacts with the co-chaperonin GroES.

It is found in the cytoplasm. The enzyme catalyses ATP + H2O + a folded polypeptide = ADP + phosphate + an unfolded polypeptide.. Functionally, together with its co-chaperonin GroES, plays an essential role in assisting protein folding. The GroEL-GroES system forms a nano-cage that allows encapsulation of the non-native substrate proteins and provides a physical environment optimized to promote and accelerate protein folding. The chain is Chaperonin GroEL from Malacoplasma penetrans (strain HF-2) (Mycoplasma penetrans).